The chain runs to 420 residues: MELLKEYNPYLEYRDGELFIEGVSLKELAQTFGTPLYVYSSNFIKERFEAYRKAFPDALICYAVKANFNPHLVKLLGELGAGADIVSGGELYLAKKAGIPPERIVYAGVGKTEKELTDAVDSEILMFNVESRQELDVLNEIAGKLGKKARIAIRVNPDVDPKTHPYIATGMQKSKFGVDIREAQKEYEYASKLENLEIVGIHCHIGSQILDISPYREAVEKVVSLYESLTQKGFDIKYLDIGGGLGIKYKPEDKEPAPQDLADLLKDLLENVKAKIILEPGRSIMGNAGILITQVQFLKDKGSKHFIIVDAGMNDLIRPSIYNAYHHIIPVETKERKKVVADIVGPICETGDFLALDREIEEVQRGEYLAVLSAGAYGFAMSSHYNMRPRAAEVLVENGSVKLIRKRENYDYIVEPSLDI.

At K65 the chain carries N6-(pyridoxal phosphate)lysine. Residues G244 and 279-282 each bind pyridoxal 5'-phosphate; that span reads EPGR. Positions 282, 318, and 322 each coordinate substrate. C348 functions as the Proton donor in the catalytic mechanism. Substrate contacts are provided by E349 and Y377. Residue Y377 coordinates pyridoxal 5'-phosphate.

It belongs to the Orn/Lys/Arg decarboxylase class-II family. LysA subfamily. In terms of assembly, homodimer. It depends on pyridoxal 5'-phosphate as a cofactor.

The catalysed reaction is meso-2,6-diaminopimelate + H(+) = L-lysine + CO2. It functions in the pathway amino-acid biosynthesis; L-lysine biosynthesis via DAP pathway; L-lysine from DL-2,6-diaminopimelate: step 1/1. Specifically catalyzes the decarboxylation of meso-diaminopimelate (meso-DAP) to L-lysine. This is Diaminopimelate decarboxylase (lysA) from Aquifex aeolicus (strain VF5).